Consider the following 655-residue polypeptide: MRPPGPRAPGLALLAALLAAPRALAEAPHLVLVDAARALRPLRPFWRSTGFCPPLPHSQADRYDLSWDQQLNLAYVGAVPHGGIEQVRTHWLLELITARESAGQGLSYNFTHLDGYLDLLRENQLLPGFELMGSPSQRFTDFEDKRQVLAWKELVSLLARRYIGRYGLSYVSKWNFETWNEPDHHDFDNVTMTLQGFLNYYDACSEGLRAASPALRFGGPGDSFHPWPRSPLCWGLLEHCHNGTNFFTGELGVRLDYISLHKKGAGSSIYILEQEQATVQQIRRLFPKFADTPVYNDEADPLVGWALPQPWRADVTYAAMVVKVVAQHQNPPRANGSAALRPALLSNDNAFLSFHPHPFTQRTLTARFQVNDTEPPHVQLLRKPVLTAMALLALLDGRQLWAEVSRGGTVLDSNHTVGVLASAHLPAGPRDAWRATVLLYASDDTRAHAARAVPVTLRLLGVPRGPGLVYVTLALDNPRCSPHGEWQRLGRPVFPTAEEFRRMRAAEDPVAEAPRPFPASGRLTLSVELRLPSLLLLHVCARPEKPPGPVTRLRALPLTRGQVLLVWSDERVGSKCLWTYEIQFSADGEVYTPISRKPSTFNLFVFSPESAVTSGSYRVRAVDYWARPGPFSTRVHYVEVPAPSGPPRPSDCERC.

An N-terminal signal peptide occupies residues 1–25; that stretch reads MRPPGPRAPGLALLAALLAAPRALA. Alpha-D-mannopyranose is bound by residues proline 53, leucine 55, and histidine 57. Histidine 90 is a binding site for alpha-L-iduronate. The N-linked (GlcNAc...) asparagine glycan is linked to asparagine 109. Asparagine 180 and glutamate 181 together coordinate alpha-L-iduronate. Catalysis depends on glutamate 181, which acts as the Proton donor. Residues asparagine 189 and asparagine 242 are each glycosylated (N-linked (GlcNAc...) asparagine). Residues lysine 263, glutamate 298, and glycine 304 each coordinate alpha-L-iduronate. Glutamate 298 (nucleophile) is an active-site residue. Tryptophan 305 contributes to the alpha-D-mannopyranose binding site. Asparagine 335 carries N-linked (GlcNAc...) asparagine glycosylation. Alpha-L-iduronate contacts are provided by aspartate 348 and arginine 362. 2 N-linked (GlcNAc...) asparagine glycosylation sites follow: asparagine 371 and asparagine 414. Cysteine 540 and cysteine 576 are joined by a disulfide.

This sequence belongs to the glycosyl hydrolase 39 family. As to quaternary structure, monomer. In terms of processing, a smaller 63 kDa protein probably arises from IDUA protein by proteolytic cleavage. Post-translationally, N-glycosylation contributes to substrate binding and is required for full enzymatic activity. Detected in testis (at protein level). Expressed ubiquitously.

The protein resides in the lysosome. The enzyme catalyses Hydrolysis of unsulfated alpha-L-iduronosidic linkages in dermatan sulfate.. In Canis lupus familiaris (Dog), this protein is Alpha-L-iduronidase (IDUA).